A 74-amino-acid polypeptide reads, in one-letter code: SPbeta prophage-derived uncharacterized HTH-type transcriptional regulator YopS (74 aa).

The 56-residue stretch at I11–L66 folds into the HTH cro/C1-type domain. A DNA-binding region (H-T-H motif) is located at residues I22–R41.

The polypeptide is SPbeta prophage-derived uncharacterized HTH-type transcriptional regulator YopS (yopS) (Bacillus subtilis (strain 168)).